The sequence spans 444 residues: C4-dicarboxylate transport protein (444 aa).

9 helical membrane-spanning segments follow: residues His21–Pro41, Leu57–Met77, Ile92–Val112, Gly161–Gly181, Leu201–Ile221, Leu234–Val254, Ile320–Ser340, Leu345–Ile365, and Ala368–Ile388.

Belongs to the dicarboxylate/amino acid:cation symporter (DAACS) (TC 2.A.23) family.

Its subcellular location is the cell inner membrane. Its function is as follows. Responsible for the transport of dicarboxylates such as succinate, fumarate, and malate from the periplasm across the membrane. The chain is C4-dicarboxylate transport protein from Brucella anthropi (strain ATCC 49188 / DSM 6882 / CCUG 24695 / JCM 21032 / LMG 3331 / NBRC 15819 / NCTC 12168 / Alc 37) (Ochrobactrum anthropi).